We begin with the raw amino-acid sequence, 883 residues long: MTESASSTSGQEFDVFSVMDWKDGVGTLPGSDLKFRVNEFGALEVITDESEMESVKKATATTTWMVPTAQDAPTSPPSSRPVFPPAYWTSPPGCPTVFSEKTGVPFRLKEQSKADGLQFCENCCQYGNGDECLSGGKYCSQNCARHAKDKDQKDERDGGEDNDEEDPKCSRKKKPKLSLKADSKDDGEERDDEMENKQDGRILRGSQRARRKRRGDSAVLKQGLPPKGKKTWCWASYLEEEKAVAVPTKLFKEHQSFPYNKNGFKVGMKLEGVDPDHQAMYCVLTVAEVCGYRIKLHFDGYSDCYDFWVNADALDIHPVGWCEKTGHKLRPPKGYKEEEFNWQSYLKTCKAQAAPKSLFENQNITVIPSGFRVGMKLEAADKKSPSVICVATVTDMVDNRFLVHFDNWDESYDYWCESNSPHIHPVGWCKEHRRTLITPPGYSHVKHFSWDKYLEETNSLPAPARAFKVKPPHGFQKKMKLEAVDKRNPLFIRVATVADTDDHRIKVHFDGWSSCYDYWIDADSPDIHPVGWCSKTGHPLQAPLSPAELMEPSETGGCPTLGCRGVGHFKKSRYLGTQSGANCPYSEINLSKERIFPDRLSGDTSPPTTPSFPRSKRMDTRESSSSPETREKHANNFKEDSEKKKENEVKTSAEAKVVREEPTPSVQQSQPPQQVQQVQHAQPPQQAQKAPQAQQAQQAQQAQQAPQAPQTPQPQQAPQVQQAQQAPQAQQAQQPQQAQQPQQAPPVQQPQQVQQAQPTQQQAQTQQQAQRRSAVFLSFKPPIPCLPLRWEQQSKLLPTVAGIPASRVSKWSTDEVSEFIQSLPGCEEHGKVFKDEQIDGEAFLLMTQTDIVKIMSIKLGPALKIFNSILMFKAAEKNSHNEL.

The tract at residues 1 to 64 (MTESASSTSG…VKKATATTTW (64 aa)) is interaction with RBPJ. Required for transcription repressor activity on Notch target genes. Positions 146–156 (HAKDKDQKDER) are enriched in basic and acidic residues. A disordered region spans residues 146–223 (HAKDKDQKDE…RGDSAVLKQG (78 aa)). Composition is skewed to acidic residues over residues 157–166 (DGGEDNDEED) and 185–194 (DDGEERDDEM). MBT repeat units follow at residues 232 to 332 (WCWA…LRPP), 340 to 439 (FNWQ…LITP), and 448 to 543 (FSWD…LQAP). A CCHHC-type; degenerate zinc finger spans residues 549-593 (LMEPSETGGCPTLGCRGVGHFKKSRYLGTQSGANCPYSEINLSKE). Residues 595–768 (IFPDRLSGDT…TQQQAQTQQQ (174 aa)) are disordered. Over residues 616–662 (KRMDTRESSSSPETREKHANNFKEDSEKKKENEVKTSAEAKVVREEP) the composition is skewed to basic and acidic residues. Lysine 638 is covalently cross-linked (Glycyl lysine isopeptide (Lys-Gly) (interchain with G-Cter in SUMO2)). Low complexity-rich tracts occupy residues 663–742 (TPSV…QQPQ) and 749–768 (QPQQ…TQQQ). The region spanning 811 to 875 (WSTDEVSEFI…FNSILMFKAA (65 aa)) is the SAM domain.

In terms of assembly, interacts with RNF2. Interacts (via SAM domain) with SAMD1 (via SAM domain); the interaction mediates L3MBTL3 binding to chromatin. Interacts with RBPJ; the interaction is required for L3MBTL3 localization to chromatin and is impaired the Notch-derived peptides containing the intracellular domain (NICD). Interacts (via SAM domain) with KDM1A. Interacts with DCAF5. Interacts with DNMT1. Interacts with E2F1. Interacts with SOX2. Interacts with SFMBT1. In terms of tissue distribution, detected in hematopoietic progenitor cells in fetal liver. Detected in adult bone marrow, heart, brain, spleen, lung, liver, kidney and testis.

The protein resides in the nucleus. In terms of biological role, is a negative regulator of Notch target genes expression, required for RBPJ-mediated transcriptional repression. It recruits KDM1A to Notch-responsive elements and promotes KDM1A-mediated H3K4me demethylation. Involved in the regulation of ubiquitin-dependent degradation of a set of methylated non-histone proteins, including SOX2. It acts as an adapter recruiting the CRL4-DCAF5 E3 ubiquitin ligase complex to methylated target proteins. Also involved in the regulation of ubiquitin-dependent degradation of methylated DNMT1 and E2F1. Required for normal maturation of myeloid progenitor cells. The polypeptide is Lethal(3)malignant brain tumor-like protein 3 (Mus musculus (Mouse)).